A 280-amino-acid chain; its full sequence is Ribosomal RNA small subunit methyltransferase A (280 aa).

6 residues coordinate S-adenosyl-L-methionine: Asn28, Leu30, Gly55, Glu77, Asp103, and Asn122.

This sequence belongs to the class I-like SAM-binding methyltransferase superfamily. rRNA adenine N(6)-methyltransferase family. RsmA subfamily.

It is found in the cytoplasm. The enzyme catalyses adenosine(1518)/adenosine(1519) in 16S rRNA + 4 S-adenosyl-L-methionine = N(6)-dimethyladenosine(1518)/N(6)-dimethyladenosine(1519) in 16S rRNA + 4 S-adenosyl-L-homocysteine + 4 H(+). Functionally, specifically dimethylates two adjacent adenosines (A1518 and A1519) in the loop of a conserved hairpin near the 3'-end of 16S rRNA in the 30S particle. May play a critical role in biogenesis of 30S subunits. The polypeptide is Ribosomal RNA small subunit methyltransferase A (Roseobacter denitrificans (strain ATCC 33942 / OCh 114) (Erythrobacter sp. (strain OCh 114))).